The primary structure comprises 1193 residues: Sperm-associated antigen 5 (1193 aa).

A disordered region spans residues 1 to 48; sequence MWRVKKLSLSLSPSPQTGKPSMRTPLRELTLQPGALTNSGKRSPACSS. Phosphoserine occurs at positions 12, 14, 43, 62, and 66. Residues 35–48 show a composition bias toward polar residues; it reads ALTNSGKRSPACSS. Residues 96 to 117 form a disordered region; sequence ESDEQPLDPIPQISSTPKTSEE. T111 is modified (phosphothreonine; by GSK3-beta). A phosphoserine mark is found at S135, S159, and S334. T336 bears the Phosphothreonine mark. A phosphoserine mark is found at S341, S353, and S362. Residues 390–405 show a composition bias toward polar residues; that stretch reads PSAPQEKSTNTSQTGL. The tract at residues 390–416 is disordered; it reads PSAPQEKSTNTSQTGLVGTKHSTSETE. The interval 482–850 is interaction with KNSTRN; it reads NKLQHLKESH…LKDTVENLTA (369 aa). 2 coiled-coil regions span residues 545 to 608 and 759 to 868; these read CCFD…SMRE and QLTQ…EKTR. At T937 the chain carries Phosphothreonine; by GSK3-beta. The residue at position 974 (S974) is a Phosphoserine; by GSK3-beta. Position 978 is a phosphothreonine; by GSK3-beta (T978). A coiled-coil region spans residues 979–1174; sequence ELQSLCSLLQ…VQHIYKTLLS (196 aa).

As to quaternary structure, homodimer, with a globular head domain and a long stalk. Homooligomer; the globular head domains associate, resulting in aster-like structures. Binds to microtubules in the mitotic spindle. Interacts with DCLRE1B/Apollo. Part of an astrin (SPAG5)-kinastrin (SKAP) complex containing KNSTRN, SPAG5, PLK1, DYNLL1 and SGO2. Interacts with KNSTRN. Interacts with RPTOR; this interaction competes with RPTOR binding to MTOR, resulting in decreased mTORC1 formation. Interacts with G3BP1. The complex formed with G3BP1 AND RPTOR is increased by oxidative stress. Interacts with OSBPL8, PCM1 and CDK5RAP2. Interacts (via C-terminus) with NUMA1 (via C-terminus); this interaction promotes the recruitment of SPAG5 to the microtubules at spindle poles in a dynein-dynactin-dependent manner. Interacts with DYNLL1. Phosphorylated by AURKA. Highly expressed in testis. Detected at low levels in placenta, liver, pancreas, thymus and colon.

The protein resides in the cytoplasm. It is found in the cytoskeleton. Its subcellular location is the spindle. The protein localises to the spindle pole. It localises to the chromosome. The protein resides in the centromere. It is found in the kinetochore. Its subcellular location is the midbody. The protein localises to the microtubule organizing center. It localises to the centrosome. The protein resides in the cytoplasmic granule. It is found in the centriolar satellite. Functionally, essential component of the mitotic spindle required for normal chromosome segregation and progression into anaphase. Required for chromosome alignment, normal timing of sister chromatid segregation, and maintenance of spindle pole architecture. In complex with SKAP, promotes stable microtubule-kinetochore attachments. May contribute to the regulation of separase activity. May regulate AURKA localization to mitotic spindle, but not to centrosomes and CCNB1 localization to both mitotic spindle and centrosomes. Involved in centriole duplication. Required for CDK5RAP2, CEP152, WDR62 and CEP63 centrosomal localization and promotes the centrosomal localization of CDK2. In non-mitotic cells, upon stress induction, inhibits mammalian target of rapamycin complex 1 (mTORC1) association and recruits the mTORC1 component RPTOR to stress granules (SGs), thereby preventing mTORC1 hyperactivation-induced apoptosis. May enhance GSK3B-mediated phosphorylation of other substrates, such as MAPT/TAU. This is Sperm-associated antigen 5 (SPAG5) from Homo sapiens (Human).